We begin with the raw amino-acid sequence, 670 residues long: Probable potassium transport system protein Kup (670 aa).

Positions 1 to 42 (MSQIPSPNDPPPAGAVPTSGAPAGPSATPAPSPTAGFSLPEH) are disordered. A compositionally biased stretch (low complexity) spans 15–35 (AVPTSGAPAGPSATPAPSPTA). The next 12 helical transmembrane spans lie at 51 to 71 (LAAL…TSPL), 91 to 111 (VLGV…FKYM), 144 to 164 (VLLM…IITP), 180 to 200 (PAME…LFLF), 208 to 228 (VGAV…VLGV), 254 to 274 (GWHG…GEAL), 290 to 310 (WLGL…ALLL), 322 to 342 (LLAP…AAIV), 380 to 400 (IYLP…VLGF), 406 to 426 (LASA…LLFH), 440 to 460 (AWPL…ANVV), and 464 to 484 (DGGW…STWK).

It belongs to the HAK/KUP transporter (TC 2.A.72) family.

The protein resides in the cell inner membrane. The enzyme catalyses K(+)(in) + H(+)(in) = K(+)(out) + H(+)(out). Functionally, transport of potassium into the cell. Likely operates as a K(+):H(+) symporter. The sequence is that of Probable potassium transport system protein Kup from Anaeromyxobacter dehalogenans (strain 2CP-C).